The chain runs to 191 residues: Protein LURP-one-related 6 (191 aa).

Belongs to the LOR family.

Might be related to the phospholipid scramblase and tubby-like superfamily of membrane tethered transcription factors. The chain is Protein LURP-one-related 6 from Arabidopsis thaliana (Mouse-ear cress).